The sequence spans 800 residues: Cell division cycle 5-like protein (800 aa).

2 HTH myb-type domains span residues 1-56 (MRNV…DPSI) and 57-106 (KKTE…DEVQ). DNA-binding regions (H-T-H motif) lie at residues 29–52 (WARI…HEWL) and 80–102 (WKTI…NRLL). Disordered stretches follow at residues 109-186 (QDNE…KRKF), 334-378 (YEKL…NIRT), 399-445 (QTPL…KQSL), and 571-610 (NKTF…NDND). A compositionally biased stretch (gly residues) spans 113–122 (NGGGSGGGGT). The span at 133-142 (NDPRRLRMGD) shows a compositional bias: basic and acidic residues. The segment covering 340 to 351 (SGSGGGSGGVGV) has biased composition (gly residues). Residues 361–376 (TASISSTAANNNTNNI) are compositionally biased toward low complexity. Composition is skewed to polar residues over residues 409-445 (NVSQ…KQSL) and 573-584 (TFPNDSITPSST). The segment covering 592-601 (DNHHHHHDDI) has biased composition (basic and acidic residues). 2 coiled-coil regions span residues 621-700 (NTEL…KIKN) and 748-800 (VALK…LSIF).

This sequence belongs to the CEF1 family. In terms of assembly, component of the precatalytic, catalytic and postcatalytic spliceosome complexes.

It is found in the nucleus. The protein resides in the cytoplasm. Its function is as follows. DNA-binding protein involved in cell cycle control. May act as a transcription activator. Plays a role in pre-mRNA splicing as core component of precatalytic, catalytic and postcatalytic spliceosomal complexes. May also play a role in the response to DNA damage (DDR). The chain is Cell division cycle 5-like protein (cdc5l) from Dictyostelium discoideum (Social amoeba).